Here is a 93-residue protein sequence, read N- to C-terminus: Putative sodium channel toxin Ts41 (93 aa).

The N-terminal stretch at 1–23 (MKIGVLFTIISMLCLLEVRKICS) is a signal peptide. Intrachain disulfides connect C22/C87, C39/C62, C48/C67, and C52/C69. The region spanning 26 to 88 (EGGYPRYFSF…FWNVYRKYCK (63 aa)) is the LCN-type CS-alpha/beta domain.

It belongs to the long (4 C-C) scorpion toxin superfamily. As to expression, expressed by the venom gland.

Its subcellular location is the secreted. Its function is as follows. The edited BmKBTx-like may modulate voltage-gated sodium channels (Nav). The non-edited form is able to form a heterodimer. In orthologs, a heterodimer with LVP beta-chain induces lipolysis in rat adipocytes, which is mediated through the beta-2 adrenergic receptor pathway (ADRB2). Since no LVP beta-chains have been identified in the venom of this scorpion, it is possible that this protein is not involved in a lipolysis process. This Tityus serrulatus (Brazilian scorpion) protein is Putative sodium channel toxin Ts41.